The sequence spans 282 residues: Pantothenate synthetase (282 aa).

30 to 37 (MGYLHEGH) provides a ligand contact to ATP. Histidine 37 (proton donor) is an active-site residue. Position 61 (glutamine 61) interacts with (R)-pantoate. Glutamine 61 is a binding site for beta-alanine. An ATP-binding site is contributed by 147-150 (GMKD). Position 153 (glutamine 153) interacts with (R)-pantoate. Residues valine 176 and 184-187 (KSSR) each bind ATP.

It belongs to the pantothenate synthetase family. In terms of assembly, homodimer.

The protein resides in the cytoplasm. It catalyses the reaction (R)-pantoate + beta-alanine + ATP = (R)-pantothenate + AMP + diphosphate + H(+). The protein operates within cofactor biosynthesis; (R)-pantothenate biosynthesis; (R)-pantothenate from (R)-pantoate and beta-alanine: step 1/1. In terms of biological role, catalyzes the condensation of pantoate with beta-alanine in an ATP-dependent reaction via a pantoyl-adenylate intermediate. The polypeptide is Pantothenate synthetase (Bacillus cereus (strain AH187)).